The chain runs to 422 residues: MVDLEAIGRRAKTAARALAKLSTEQKNAALCAIADGLLARQDKILAANAADVADAEKGGTPPAIVDRMLLTPARLAAIAGDCRQVASLPDPVGEIFDRRELPSGLRLYKRRVPIGVIGAIYEARPNVTVDIASLCLKAGNAVILRGGSDIARSVAATTEVIALALEQAGLPAFAVQSIIDPDRELVRQLLRLDRYVDMIIPRGGAGLHRFCVENATVPVIVGGMGVSHIYVEPSADFARAVPVIVNAKVQRPGACNALDTLLVHRAAASTFLPLVAAALAQHGVELRCDLEALAILADAPGHEAWNLKPASPTDFGCEFLALIVAIKIVGSIDEALDHIALYGGHSEAILTGDPISAERFTREVDATAVFVNASTRFNDGGQFGLGAEVAISTNRLHARGPMGLQELTTYTWIGEGDYLVRA.

The protein belongs to the gamma-glutamyl phosphate reductase family.

The protein localises to the cytoplasm. It catalyses the reaction L-glutamate 5-semialdehyde + phosphate + NADP(+) = L-glutamyl 5-phosphate + NADPH + H(+). Its pathway is amino-acid biosynthesis; L-proline biosynthesis; L-glutamate 5-semialdehyde from L-glutamate: step 2/2. In terms of biological role, catalyzes the NADPH-dependent reduction of L-glutamate 5-phosphate into L-glutamate 5-semialdehyde and phosphate. The product spontaneously undergoes cyclization to form 1-pyrroline-5-carboxylate. This Chloroflexus aurantiacus (strain ATCC 29366 / DSM 635 / J-10-fl) protein is Gamma-glutamyl phosphate reductase.